A 275-amino-acid chain; its full sequence is tRNA pseudouridine synthase A (275 aa).

Aspartate 72 functions as the Nucleophile in the catalytic mechanism. A substrate-binding site is contributed by tyrosine 133.

Belongs to the tRNA pseudouridine synthase TruA family. Homodimer.

The enzyme catalyses uridine(38/39/40) in tRNA = pseudouridine(38/39/40) in tRNA. Formation of pseudouridine at positions 38, 39 and 40 in the anticodon stem and loop of transfer RNAs. This Gluconobacter oxydans (strain 621H) (Gluconobacter suboxydans) protein is tRNA pseudouridine synthase A.